Here is a 1066-residue protein sequence, read N- to C-terminus: MPGDEERGFLAAREELASALRWDSAQVFPLEQLMPLLATSLPPAARYLQLDAGRLVRCNAHGEPRNYLNTLSTALNILEKYGRNLLSPQRPRYWRSVKFNNPVFRSTVDAVQGGRDVLRLYGYTEERPDGLSFPEGQEEPDEYQVAVVTLEVLLLRTELSLLLQNTHPRQNALDQLLRESVEDGMLQLSEFHPLLREIVPGPRPSAQGSTPGPCFLCGSAPGTLHCPACNQVSCPACDILFHGHPSRAHHLRQALPGSHQTASLSSSLPASSQPRPPSSSLALGDSSLSSPDPANACLPWHCLTCATLNEPWAVFCAVCSQPKGCKVPGIEGSHGTGGLEPEPARDQWACQSCTFENEAAAVLCAICERPRLAQPPSLVVDSHDAGVCQQSLKQEDPLLTAAQPQVWYCDHCTFCNSGPVWVCAMCNRTRDPIPTQPALQSYPSSLEKGRPKPGSSQHLGSSLPASCGDPEKQRQDKMRKEGLQLVSMIQEGETAGASPEEVFSALQYSGTEVPLQWLRSELSYVLEMVAELAGQQDPELGAFSCQEARKAWLDRHGNLDEAVEECVRARRRKVHELQSLGFGPKEGSLQALFQHGGDVARALTELQRQRLEPFHQRLWDRDPEPTPCWDGLDRQSLVRRLLAVYTLPSWGRAELALALLQETPRNYELLDVVEAVRHSQDRAFLRRLLAQECAVCGWALPRNRMQALISCECTICPECFRQHFTIALKEKHITDMVCPACGRPDLTDDAQLLSYFSTLDIQLRESLDPDAYALFHKKLTEAVLMRDPKFLWCAQCSFGFIYEREQLEATCPQCHQTFCVRCKRQWEEQHRGRSCEDFQNWKRTNDPEYQAQGLAMYLQENGIDCPKCKFSYALARGGCMHFHCTQCRHQFCSGCYNAFYAKNKCPDPNCKVKKSLHGHHPRDCLFYLRDWTAARLQKLLQDNNVMFNTEPPAGTRAVPGGGCRVMEQKEVHSGFRDEACGKETPPGYAGLCQAHYKEYLVSLINAHSLDPATLYEVEELETATIRYLHLAPQPADGEDLPAYQARLLQKLREEVPLGQSIARRRK.

The tract at residues 1–479 (MPGDEERGFL…PEKQRQDKMR (479 aa)) is polyubiquitin-binding. A PUB domain is found at 70–141 (TLSTALNILE…SFPEGQEEPD (72 aa)). The disordered stretch occupies residues 251–287 (LRQALPGSHQTASLSSSLPASSQPRPPSSSLALGDSS). The span at 262-287 (ASLSSSLPASSQPRPPSSSLALGDSS) shows a compositional bias: low complexity. RanBP2-type zinc fingers lie at residues 293-325 (PANA…PKGC) and 344-373 (ARDQ…PRLA). Residue Ser-377 is modified to Phosphoserine. The RanBP2-type 3 zinc-finger motif lies at 403–432 (QPQVWYCDHCTFCNSGPVWVCAMCNRTRDP). The tract at residues 434-478 (PTQPALQSYPSSLEKGRPKPGSSQHLGSSLPASCGDPEKQRQDKM) is disordered. The span at 454–464 (GSSQHLGSSLP) shows a compositional bias: polar residues. Basic and acidic residues predominate over residues 469–478 (DPEKQRQDKM). The interval 557 to 610 (GNLDEAVEECVRARRRKVHELQSLGFGPKEGSLQALFQHGGDVARALTELQRQR) is interaction with RBCK1. Residues 558–609 (NLDEAVEECVRARRRKVHELQSLGFGPKEGSLQALFQHGGDVARALTELQRQ) form the UBA domain. A TRIAD supradomain region spans residues 689–923 (LAQECAVCGW…KSLHGHHPRD (235 aa)). Zn(2+)-binding residues include Cys-693, Cys-696, Cys-711, Cys-713, Cys-716, Cys-719, Cys-738, Cys-741, Cys-793, Cys-796, Cys-811, Cys-814, Cys-819, Cys-822, His-830, Cys-835, Cys-865, and Cys-868. The RING-type 1 zinc finger occupies 693–743 (CAVCGWALPRNRMQALISCECTICPECFRQHFTIALKEKHITDMVCPACGR). The IBR-type zinc finger occupies 773 to 835 (ALFHKKLTEA…WEEQHRGRSC (63 aa)). The RING-type 2; atypical zinc finger occupies 865–895 (CPKCKFSYALARGGCMHFHCTQCRHQFCSGC). Residue Cys-879 is part of the active site. 6 residues coordinate Zn(2+): Cys-884, Cys-887, Cys-892, Cys-895, Cys-910, and His-919. Positions 904–1066 (KCPDPNCKVK…LGQSIARRRK (163 aa)) are LDD domain.

It belongs to the RBR family. Component of the LUBAC complex (linear ubiquitin chain assembly complex) which consists of SHARPIN, RBCK1 and RNF31. LUBAC has a MW of approximately 600 kDa suggesting a heteromultimeric assembly of its subunits. Associates with the TNF-R1 signaling complex (TNF-RSC) in a stimulation-dependent manner. Interacts (via the PUB domain) with OTULIN (via the PIM motif); the interaction is direct. Interacts (via the PUB domain) with VCP (via the PIM motif). Interacts (via the PUB domain) with SPATA2 (via the PIM motif); interaction is direct and bridges RNF31 and CYLD. Interacts with CYLD; the interaction is indirect and is mediated via SPATA2. Interacts with MUSK. Interacts with CARD11, promoting linear ubiquitination of BCL10. Post-translationally, autoubiquitinated. Interaction with OTULIN is required to suppress formation of 'Met-1'-linked polyubiquitin chains and prevent subsequent inactivation of the LUBAC complex. In terms of processing, cleaved by caspase during apoptosis. In terms of tissue distribution, widely expressed (at protein level). Not expressed in heart.

The protein localises to the cytoplasm. It carries out the reaction [E2 ubiquitin-conjugating enzyme]-S-ubiquitinyl-L-cysteine + [acceptor protein]-L-lysine = [E2 ubiquitin-conjugating enzyme]-L-cysteine + [acceptor protein]-N(6)-ubiquitinyl-L-lysine.. It functions in the pathway protein modification; protein ubiquitination. E3 ubiquitin-protein ligase component of the LUBAC complex which conjugates linear ('Met-1'-linked) polyubiquitin chains to substrates and plays a key role in NF-kappa-B activation and regulation of inflammation. LUBAC conjugates linear polyubiquitin to IKBKG and RIPK1 and is involved in activation of the canonical NF-kappa-B and the JNK signaling pathways. Linear ubiquitination mediated by the LUBAC complex interferes with TNF-induced cell death and thereby prevents inflammation. LUBAC is recruited to the TNF-R1 signaling complex (TNF-RSC) following polyubiquitination of TNF-RSC components by BIRC2 and/or BIRC3 and to conjugate linear polyubiquitin to IKBKG and possibly other components contributing to the stability of the complex. The LUBAC complex is also involved in innate immunity by conjugating linear polyubiquitin chains at the surface of bacteria invading the cytosol to form the ubiquitin coat surrounding bacteria. LUBAC is not able to initiate formation of the bacterial ubiquitin coat, and can only promote formation of linear polyubiquitins on pre-existing ubiquitin. Recruited to the surface of bacteria by RNF213, which initiates the bacterial ubiquitin coat. The bacterial ubiquitin coat acts as an 'eat-me' signal for xenophagy and promotes NF-kappa-B activation. Together with OTULIN, the LUBAC complex regulates the canonical Wnt signaling during angiogenesis. RNF31 is required for linear ubiquitination of BCL10, thereby promoting TCR-induced NF-kappa-B activation. Binds polyubiquitin of different linkage types. This Mus musculus (Mouse) protein is E3 ubiquitin-protein ligase RNF31.